Here is a 711-residue protein sequence, read N- to C-terminus: Polyribonucleotide nucleotidyltransferase (711 aa).

Positions 486 and 492 each coordinate Mg(2+). A KH domain is found at 553-612 (PRIHTIKISTDKIKDVIGKGGSVIRALTEETGTTIEIEDDGTVKIAATDGEKAKYAIRRI). The 69-residue stretch at 622 to 690 (GRIYNGKVTR…RQGRVRLSIK (69 aa)) folds into the S1 motif domain. The interval 689–711 (IKEATEQTQPAAAPEAPTSEQGE) is disordered. Residues 694–711 (EQTQPAAAPEAPTSEQGE) show a composition bias toward low complexity.

This sequence belongs to the polyribonucleotide nucleotidyltransferase family. In terms of assembly, component of the RNA degradosome, which is a multiprotein complex involved in RNA processing and mRNA degradation. Requires Mg(2+) as cofactor.

The protein resides in the cytoplasm. It catalyses the reaction RNA(n+1) + phosphate = RNA(n) + a ribonucleoside 5'-diphosphate. In terms of biological role, involved in mRNA degradation. Catalyzes the phosphorolysis of single-stranded polyribonucleotides processively in the 3'- to 5'-direction. The sequence is that of Polyribonucleotide nucleotidyltransferase from Salmonella arizonae (strain ATCC BAA-731 / CDC346-86 / RSK2980).